The sequence spans 349 residues: CCN family member 2 (349 aa).

An N-terminal signal peptide occupies residues 1–26 (MSATGLSPVRCAFVLLLALCSRPASG). In terms of domain architecture, IGFBP N-terminal spans 27–98 (QDCSGQCQCA…NRKIGVCTAK (72 aa)). 6 disulfides stabilise this stretch: Cys29–Cys54, Cys33–Cys56, Cys35–Cys57, Cys43–Cys60, Cys68–Cys82, and Cys74–Cys95. Positions 101–167 (APCVFGGTVY…GKCCEEWVCD (67 aa)) constitute a VWFC domain. Residues 198–243 (NCLVQTTEWSACSKTCGMGISTRVTNDNAFCRLEKQSRLCMVRPCE) enclose the TSP type-1 domain. The interval 247–349 (EENIKKGKKC…YYRKMYGDMA (103 aa)) is heparin-binding. 5 disulfide bridges follow: Cys256/Cys293, Cys273/Cys307, Cys284/Cys323, Cys287/Cys325, and Cys292/Cys329. The CTCK domain occupies 256–330 (CIRTPKISKP…KTCACHYNCP (75 aa)).

Belongs to the CCN family. In terms of assembly, monomer. Interacts with TSKU.

Its subcellular location is the secreted. The protein localises to the extracellular space. The protein resides in the extracellular matrix. Functionally, major connective tissue mitoattractant secreted by vascular endothelial cells. Promotes proliferation and differentiation of chondrocytes. Is involved in the stimulation of osteoblast differentiation and has a critical role in osteogenesis. Mediates heparin- and divalent cation-dependent cell adhesion in many cell types including fibroblasts, myofibroblasts, endothelial and epithelial cells. Enhances fibroblast growth factor-induced DNA synthesis. This chain is CCN family member 2 (CCN2), found in Sus scrofa (Pig).